The following is a 363-amino-acid chain: NAD kinase 1 (363 aa).

The active-site Proton acceptor is D68. NAD(+) is bound by residues 68–69 (DG), R73, 175–176 (ND), R186, D205, A240, and Q275.

Belongs to the NAD kinase family. The cofactor is a divalent metal cation.

The protein localises to the cytoplasm. The enzyme catalyses NAD(+) + ATP = ADP + NADP(+) + H(+). Its function is as follows. Involved in the regulation of the intracellular balance of NAD and NADP, and is a key enzyme in the biosynthesis of NADP. Catalyzes specifically the phosphorylation on 2'-hydroxyl of the adenosine moiety of NAD to yield NADP. This Streptomyces coelicolor (strain ATCC BAA-471 / A3(2) / M145) protein is NAD kinase 1.